Consider the following 345-residue polypeptide: MLKKAISKLVEGKNLSESEIIEALDCIMEGKATPAQIGSFITALRIKGETIEEITGCAKVMRAKADKICPNVDYYIDTCGTGGDGTNTFNISTATAFVAAAGGVYVAKHGNRSVSSKSGSADVLEALGVNIDLDPVQVKECIEKVGIGFIYAPVFHKSMKHAAGPRKELGIRTIFNILGPLTNPSNAKGQVLGVFNPNLTELMANVLLNLGIERAMVIHGMDGMDEITTTTSTKVSEVRNNEVITYELFPENYGIALASPEDLTGGNAEENAQIIRRIFNGEKGPKRDIVVLNSAAALYVGKVVSSIEEGIGLAEEVIDSGKALQKLDEFVEFTNSFISYNEMSG.

5-phospho-alpha-D-ribose 1-diphosphate-binding positions include G80, G83–D84, T88, N90–T93, K108–S116, and S120. G80 is a binding site for anthranilate. S92 lines the Mg(2+) pocket. N111 is an anthranilate binding site. Residue R166 participates in anthranilate binding. Residues D225 and E226 each coordinate Mg(2+).

It belongs to the anthranilate phosphoribosyltransferase family. Homodimer. The cofactor is Mg(2+).

It carries out the reaction N-(5-phospho-beta-D-ribosyl)anthranilate + diphosphate = 5-phospho-alpha-D-ribose 1-diphosphate + anthranilate. It functions in the pathway amino-acid biosynthesis; L-tryptophan biosynthesis; L-tryptophan from chorismate: step 2/5. Functionally, catalyzes the transfer of the phosphoribosyl group of 5-phosphorylribose-1-pyrophosphate (PRPP) to anthranilate to yield N-(5'-phosphoribosyl)-anthranilate (PRA). This is Anthranilate phosphoribosyltransferase from Acetivibrio thermocellus (strain ATCC 27405 / DSM 1237 / JCM 9322 / NBRC 103400 / NCIMB 10682 / NRRL B-4536 / VPI 7372) (Clostridium thermocellum).